Here is a 294-residue protein sequence, read N- to C-terminus: Flavin-dependent thymidylate synthase (294 aa).

The region spanning 27 to 250 (GFIRVIDYMG…PFTYEAFEEY (224 aa)) is the ThyX domain. FAD is bound by residues threonine 73, 96-98 (RHR), and glutamate 104. Residues 93 to 96 (QWIR), 104 to 108 (EYSAR), and arginine 189 contribute to the dUMP site. Residues 96–106 (RHRTASVNEYS) carry the ThyX motif motif. Residues 205–207 (NLH) and histidine 211 each bind FAD. Arginine 216 is a binding site for dUMP. The active-site Involved in ionization of N3 of dUMP, leading to its activation is the arginine 216.

This sequence belongs to the thymidylate synthase ThyX family. In terms of assembly, homotetramer. FAD is required as a cofactor.

The enzyme catalyses dUMP + (6R)-5,10-methylene-5,6,7,8-tetrahydrofolate + NADPH + H(+) = dTMP + (6S)-5,6,7,8-tetrahydrofolate + NADP(+). Its pathway is pyrimidine metabolism; dTTP biosynthesis. Catalyzes the reductive methylation of 2'-deoxyuridine-5'-monophosphate (dUMP) to 2'-deoxythymidine-5'-monophosphate (dTMP) while utilizing 5,10-methylenetetrahydrofolate (mTHF) as the methyl donor, and NADPH and FADH(2) as the reductant. The protein is Flavin-dependent thymidylate synthase of Rickettsia typhi (strain ATCC VR-144 / Wilmington).